The sequence spans 43 residues: Kappa-actitoxin-Avd4p (43 aa).

3 disulfides stabilise this stretch: Cys-4–Cys-39, Cys-6–Cys-32, and Cys-22–Cys-40.

The protein localises to the secreted. The protein resides in the nematocyst. In terms of biological role, blocks Kv3 voltage-gated potassium channels. Reduces blood pressure. This is Kappa-actitoxin-Avd4p from Anemonia viridis (Snakelocks anemone).